The chain runs to 905 residues: Transcription termination factor 1 (905 aa).

Composition is skewed to basic and acidic residues over residues 1-16 (MEGE…PVSD) and 24-33 (IHKERPQKHS). The segment at 1–33 (MEGESSRFEIHTPVSDKKKKKCSIHKERPQKHS) is disordered. The interval 1 to 223 (MEGESSRFEI…AHKNKSKKKK (223 aa)) is N-terminal region (NRD). Ser-65 carries the post-translational modification Phosphoserine. Positions 151 to 443 (SHAHKSEALH…KSRPRQKKTQ (293 aa)) are disordered. 2 stretches are compositionally biased toward basic residues: residues 163 to 174 (VREKKNKKHQRK) and 215 to 226 (HKNKSKKKKKKS). The residue at position 240 (Ser-240) is a Phosphoserine. Thr-248 carries the post-translational modification Phosphothreonine. 3 stretches are compositionally biased toward basic residues: residues 270–283 (THKK…KKKS), 330–339 (NKSKKKKKKS), and 385–401 (TKKK…KRAR). Ser-403 is modified (phosphoserine). Over residues 410–419 (PSKNSESTLF) the composition is skewed to polar residues. Phosphotyrosine is present on Tyr-476. Residues Ser-478, Ser-481, and Ser-487 each carry the phosphoserine modification. A may be involved in interaction with ARF region spans residues 498-886 (LQEFIPNIKD…IEKESEGQAP (389 aa)). Myb-like domains lie at 612 to 661 (DVNN…SQIS) and 661 to 745 (SSQR…TEIL). Lys-700 participates in a covalent cross-link: Glycyl lysine isopeptide (Lys-Gly) (interchain with G-Cter in SUMO2). Phosphoserine is present on Ser-872.

In terms of assembly, oligomer. The oligomeric structure enables to interact simultaneously with two separate DNA fragments. Interacts with BAZ2A/TIP5. Interacts with CAVIN1. Interacts (via the N-terminal region (NRD) and a C-terminal region) with CDKN2A/ARF; the interaction is direct. Interacts (via C-terminal region) with NPM1/B23.

It localises to the nucleus. The protein localises to the nucleolus. Its subcellular location is the nucleoplasm. Its function is as follows. Multifunctional nucleolar protein that terminates ribosomal gene transcription, mediates replication fork arrest and regulates RNA polymerase I transcription on chromatin. Plays a dual role in rDNA regulation, being involved in both activation and silencing of rDNA transcription. Interaction with BAZ2A/TIP5 recovers DNA-binding activity. The polypeptide is Transcription termination factor 1 (TTF1) (Homo sapiens (Human)).